Consider the following 209-residue polypeptide: Peptide deformylase 2 (209 aa).

Residues cysteine 101 and histidine 149 each contribute to the Fe cation site. The active site involves glutamate 150. Histidine 153 is a binding site for Fe cation.

It belongs to the polypeptide deformylase family. Requires Fe(2+) as cofactor.

It catalyses the reaction N-terminal N-formyl-L-methionyl-[peptide] + H2O = N-terminal L-methionyl-[peptide] + formate. In terms of biological role, removes the formyl group from the N-terminal Met of newly synthesized proteins. Requires at least a dipeptide for an efficient rate of reaction. N-terminal L-methionine is a prerequisite for activity but the enzyme has broad specificity at other positions. The sequence is that of Peptide deformylase 2 from Coxiella burnetii (strain RSA 493 / Nine Mile phase I).